Reading from the N-terminus, the 44-residue chain is Thymosin beta-4 (44 aa).

Residues Met1–Glu25 are compositionally biased toward basic and acidic residues. A disordered region spans residues Met1–Ser44. An N-acetylalanine modification is found at Ala2. Lys4 carries the post-translational modification N6-acetyllysine. Lys12 is modified (N6-acetyllysine; alternate). A Glycyl lysine isopeptide (Lys-Gly) (interchain with G-Cter in SUMO2); alternate cross-link involves residue Lys12. A Phosphothreonine modification is found at Thr23. Lys26 is subject to N6-acetyllysine. Phosphoserine is present on Ser31. Lys32 is subject to N6-acetyllysine. The span at Glu33 to Ser44 shows a compositional bias: basic and acidic residues. Residue Thr34 is modified to Phosphothreonine. An N6-acetyllysine modification is found at Lys39.

It belongs to the thymosin beta family. In terms of tissue distribution, originally found in thymus but it is widely distributed in many tissues.

The protein resides in the cytoplasm. The protein localises to the cytoskeleton. Its function is as follows. Plays an important role in the organization of the cytoskeleton. Binds to and sequesters actin monomers (G actin) and therefore inhibits actin polymerization. In terms of biological role, seraspenide inhibits the entry of hematopoietic pluripotent stem cells into the S-phase. This Oryctolagus cuniculus (Rabbit) protein is Thymosin beta-4 (TMSB4).